A 514-amino-acid chain; its full sequence is Nuclear hormone receptor family member nhr-85 (514 aa).

Positions 28 to 48 (TSFSSPPATSSSSLLSPSPSS) are disordered. Residues 110-186 (TILCQVCSDK…VGMSRDAVRF (77 aa)) constitute a DNA-binding region (nuclear receptor). 2 consecutive NR C4-type zinc fingers follow at residues 113–133 (CQVC…CEGC) and 150–174 (CTRA…LKKC). The NR LBD domain maps to 216 to 514 (QYENLTEVMH…VSPVPTTLSE (299 aa)). The disordered stretch occupies residues 465 to 514 (ERPRRISSSGAQEPLNLSLPHVRHQVKRDVDSDEQLEEMKVSPVPTTLSE).

The protein belongs to the nuclear hormone receptor family.

It is found in the nucleus. Functionally, orphan nuclear receptor. The chain is Nuclear hormone receptor family member nhr-85 (nhr-85) from Caenorhabditis elegans.